The sequence spans 487 residues: 4-alpha-glucanotransferase (487 aa).

It belongs to the disproportionating enzyme family.

It localises to the cytoplasm. The enzyme catalyses Transfers a segment of a (1-&gt;4)-alpha-D-glucan to a new position in an acceptor, which may be glucose or a (1-&gt;4)-alpha-D-glucan.. Catalyzes a disproportionation reaction in which single or multiple glucose units from oligosaccharides are transferred to the 4-hydroxyl group of acceptor sugars. Glucose, maltose and maltotriose can act as acceptor, whereas of the three only maltotriose can act as donor. The chain is 4-alpha-glucanotransferase (malQ) from Clostridium butyricum.